A 376-amino-acid chain; its full sequence is Peroxisomal membrane protein PEX27 (376 aa).

Homooligomer. Interacts with PEX25 and PEX34.

It localises to the peroxisome membrane. Functionally, required for regulation of peroxisome size and number. Also promotes peroxisome division and biogenesis. The chain is Peroxisomal membrane protein PEX27 (PEX27) from Saccharomyces cerevisiae (strain ATCC 204508 / S288c) (Baker's yeast).